The sequence spans 383 residues: Probable butyrate kinase (383 aa).

It belongs to the acetokinase family.

It is found in the cytoplasm. It catalyses the reaction butanoate + ATP = butanoyl phosphate + ADP. This chain is Probable butyrate kinase, found in Deinococcus radiodurans (strain ATCC 13939 / DSM 20539 / JCM 16871 / CCUG 27074 / LMG 4051 / NBRC 15346 / NCIMB 9279 / VKM B-1422 / R1).